Reading from the N-terminus, the 305-residue chain is tRNA pseudouridine synthase B (305 aa).

Residue D39 is the Nucleophile of the active site.

Belongs to the pseudouridine synthase TruB family. Type 1 subfamily.

The enzyme catalyses uridine(55) in tRNA = pseudouridine(55) in tRNA. Responsible for synthesis of pseudouridine from uracil-55 in the psi GC loop of transfer RNAs. The sequence is that of tRNA pseudouridine synthase B from Staphylococcus aureus (strain MRSA252).